We begin with the raw amino-acid sequence, 805 residues long: Sucrose synthase (805 aa).

The tract at residues 275–752 (MVFNVVILSP…GLKRIEEKYT (478 aa)) is GT-B glycosyltransferase.

Belongs to the glycosyltransferase 1 family. Plant sucrose synthase subfamily. In terms of tissue distribution, expression is at least 10-fold higher in tubers compared to photosynthetically active tissues.

It catalyses the reaction an NDP-alpha-D-glucose + D-fructose = a ribonucleoside 5'-diphosphate + sucrose + H(+). Its function is as follows. Sucrose-cleaving enzyme that provides UDP-glucose and fructose for various metabolic pathways. In Solanum tuberosum (Potato), this protein is Sucrose synthase.